Reading from the N-terminus, the 210-residue chain is Somatotropin-2 (210 aa).

Positions Met-1 to Ala-22 are cleaved as a signal peptide. His-38 contacts Zn(2+). Residues Cys-71 and Cys-183 are joined by a disulfide bond. Glu-192 contributes to the Zn(2+) binding site. Cys-200 and Cys-208 form a disulfide bridge.

It belongs to the somatotropin/prolactin family.

It is found in the secreted. Its function is as follows. Growth hormone plays an important role in growth control and is involved in the regulation of several anabolic processes. Implicated as an osmoregulatory substance important for seawater adaptation. The sequence is that of Somatotropin-2 (gh2) from Carassius auratus (Goldfish).